We begin with the raw amino-acid sequence, 977 residues long: DNA-directed RNA polymerase 3A, chloroplastic (977 aa).

Residues 1-72 (MASTASYSPS…NNIQSQTTVC (72 aa)) constitute a chloroplast transit peptide. Catalysis depends on residues aspartate 678, lysine 753, and aspartate 910.

The protein belongs to the phage and mitochondrial RNA polymerase family.

The protein localises to the plastid. Its subcellular location is the chloroplast. It carries out the reaction RNA(n) + a ribonucleoside 5'-triphosphate = RNA(n+1) + diphosphate. Functionally, DNA-dependent RNA polymerase catalyzes the transcription of DNA into RNA using the four ribonucleoside triphosphates as substrates. The sequence is that of DNA-directed RNA polymerase 3A, chloroplastic (RPOT3-SYL) from Nicotiana tabacum (Common tobacco).